The sequence spans 801 residues: Phenylalanine--tRNA ligase beta subunit (801 aa).

A tRNA-binding domain is found at 39–153 (ADGLSKLVVG…EEAVPGDAIF (115 aa)). In terms of domain architecture, B5 spans 406–481 (TEPVEVSTSL…RIYGYDKLPT (76 aa)). Mg(2+) contacts are provided by aspartate 459, aspartate 465, glutamate 468, and glutamate 469. Residues 708-801 (TKFPAMTRDV…LTEQVGAEVR (94 aa)) form the FDX-ACB domain.

The protein belongs to the phenylalanyl-tRNA synthetase beta subunit family. Type 1 subfamily. In terms of assembly, tetramer of two alpha and two beta subunits. Mg(2+) serves as cofactor.

Its subcellular location is the cytoplasm. The enzyme catalyses tRNA(Phe) + L-phenylalanine + ATP = L-phenylalanyl-tRNA(Phe) + AMP + diphosphate + H(+). The chain is Phenylalanine--tRNA ligase beta subunit from Streptococcus pyogenes serotype M1.